A 314-amino-acid chain; its full sequence is Lipoyl synthase (314 aa).

[4Fe-4S] cluster-binding residues include Cys-55, Cys-60, Cys-66, Cys-81, Cys-85, Cys-88, and Ser-292. The Radical SAM core domain maps to 67-281; it reads WEDREATFLI…TQYAEGLGFS (215 aa).

It belongs to the radical SAM superfamily. Lipoyl synthase family. [4Fe-4S] cluster serves as cofactor.

It is found in the cytoplasm. The enzyme catalyses [[Fe-S] cluster scaffold protein carrying a second [4Fe-4S](2+) cluster] + N(6)-octanoyl-L-lysyl-[protein] + 2 oxidized [2Fe-2S]-[ferredoxin] + 2 S-adenosyl-L-methionine + 4 H(+) = [[Fe-S] cluster scaffold protein] + N(6)-[(R)-dihydrolipoyl]-L-lysyl-[protein] + 4 Fe(3+) + 2 hydrogen sulfide + 2 5'-deoxyadenosine + 2 L-methionine + 2 reduced [2Fe-2S]-[ferredoxin]. Its pathway is protein modification; protein lipoylation via endogenous pathway; protein N(6)-(lipoyl)lysine from octanoyl-[acyl-carrier-protein]: step 2/2. Its function is as follows. Catalyzes the radical-mediated insertion of two sulfur atoms into the C-6 and C-8 positions of the octanoyl moiety bound to the lipoyl domains of lipoate-dependent enzymes, thereby converting the octanoylated domains into lipoylated derivatives. This Mycobacterium leprae (strain Br4923) protein is Lipoyl synthase.